The chain runs to 1250 residues: DNA-directed RNA polymerase subunit beta'' (1250 aa).

4 residues coordinate Zn(2+): cysteine 224, cysteine 314, cysteine 321, and cysteine 324.

The protein belongs to the RNA polymerase beta' chain family. RpoC2 subfamily. In plastids the minimal PEP RNA polymerase catalytic core is composed of four subunits: alpha, beta, beta', and beta''. When a (nuclear-encoded) sigma factor is associated with the core the holoenzyme is formed, which can initiate transcription. Requires Zn(2+) as cofactor.

Its subcellular location is the plastid. The protein resides in the chloroplast. The enzyme catalyses RNA(n) + a ribonucleoside 5'-triphosphate = RNA(n+1) + diphosphate. Functionally, DNA-dependent RNA polymerase catalyzes the transcription of DNA into RNA using the four ribonucleoside triphosphates as substrates. The polypeptide is DNA-directed RNA polymerase subunit beta'' (Staurastrum punctulatum (Green alga)).